Here is a 229-residue protein sequence, read N- to C-terminus: Galactonate operon transcriptional repressor (229 aa).

Positions 1–71 constitute an HTH gntR-type domain; the sequence is MTLNKTDRIV…RYRGAFVAPR (71 aa). The H-T-H motif DNA-binding region spans 31–50; it reads EAELCEEFATSRNIIREVFR. Residues Asp-146, His-150, and His-195 each coordinate Zn(2+).

Homodimer.

D-galactonate binds DgoR and induces a conformational change in the protein, which decreases its affinity for DNA and consequently derepresses transcription of the dgoRKADT operon. Involved in the regulation of D-galactonate metabolism. Represses the expression of the dgoRKADT operon by binding to two closely spaced inverted repeats in the cis-acting element, which overlap with the D-galactonate responsive dgo promoter. Employs a derepression mechanism using D-galactonate as a specific effector molecule. This Escherichia coli (strain K12) protein is Galactonate operon transcriptional repressor.